The following is a 335-amino-acid chain: tRNA-dihydrouridine(20/20a) synthase (335 aa).

Residues 20–22 and Q72 each bind FMN; that span reads PML. The Proton donor role is filled by C102. Residues K141, H173, 213–215, and 235–236 each bind FMN; these read NGG and GR.

Belongs to the Dus family. DusA subfamily. Requires FMN as cofactor.

The enzyme catalyses 5,6-dihydrouridine(20) in tRNA + NADP(+) = uridine(20) in tRNA + NADPH + H(+). It carries out the reaction 5,6-dihydrouridine(20) in tRNA + NAD(+) = uridine(20) in tRNA + NADH + H(+). It catalyses the reaction 5,6-dihydrouridine(20a) in tRNA + NADP(+) = uridine(20a) in tRNA + NADPH + H(+). The catalysed reaction is 5,6-dihydrouridine(20a) in tRNA + NAD(+) = uridine(20a) in tRNA + NADH + H(+). Its function is as follows. Catalyzes the synthesis of 5,6-dihydrouridine (D), a modified base found in the D-loop of most tRNAs, via the reduction of the C5-C6 double bond in target uridines. Specifically modifies U20 and U20a in tRNAs. This is tRNA-dihydrouridine(20/20a) synthase from Shewanella oneidensis (strain ATCC 700550 / JCM 31522 / CIP 106686 / LMG 19005 / NCIMB 14063 / MR-1).